The sequence spans 857 residues: Protein translocase subunit SecA (857 aa).

ATP is bound by residues glutamine 88, 106 to 110 (GEGKT), and aspartate 496. Cysteine 833, cysteine 835, cysteine 844, and cysteine 845 together coordinate Zn(2+).

The protein belongs to the SecA family. Monomer and homodimer. Part of the essential Sec protein translocation apparatus which comprises SecA, SecYEG and auxiliary proteins SecDF-YajC and YidC. Zn(2+) serves as cofactor.

Its subcellular location is the cell inner membrane. It localises to the cytoplasm. The enzyme catalyses ATP + H2O + cellular proteinSide 1 = ADP + phosphate + cellular proteinSide 2.. Functionally, part of the Sec protein translocase complex. Interacts with the SecYEG preprotein conducting channel. Has a central role in coupling the hydrolysis of ATP to the transfer of proteins into and across the cell membrane, serving as an ATP-driven molecular motor driving the stepwise translocation of polypeptide chains across the membrane. This is Protein translocase subunit SecA from Sulfurimonas denitrificans (strain ATCC 33889 / DSM 1251) (Thiomicrospira denitrificans (strain ATCC 33889 / DSM 1251)).